Reading from the N-terminus, the 597-residue chain is Tubulin polyglutamylase ttll-4 (597 aa).

Positions 1 to 18 are enriched in polar residues; sequence MSSGYSSAPSVSHTSSEA. Disordered regions lie at residues 1-39 and 80-107; these read MSSGYSSAPSVSHTSSEADLNRIESYEDGVDEEASDEQR and SKSKKKKQCPPNITIEKKNGNSSPFLKS. Residues 26–35 show a composition bias toward acidic residues; the sequence is YEDGVDEEAS. Residues 134-472 enclose the TTL domain; the sequence is QSRLTWCHNS…HVPPSFDKLH (339 aa). ATP-binding positions include lysine 250, 256–257, 278–281, and 291–293; these read RG, QHYI, and KFD. Residue arginine 256 coordinates a protein. Arginine 317 serves as a coordination point for L-glutamate. 338-339 contacts ATP; that stretch reads TN. Residues tyrosine 340, serine 341, and lysine 358 each coordinate L-glutamate. The Mg(2+) site is built by aspartate 418, glutamate 431, and asparagine 433. Lysine 449 is an L-glutamate binding site.

The protein belongs to the tubulin--tyrosine ligase family. It depends on Mg(2+) as a cofactor.

It catalyses the reaction L-glutamyl-[protein] + L-glutamate + ATP = gamma-L-glutamyl-L-glutamyl-[protein] + ADP + phosphate + H(+). In terms of biological role, monoglutamylase which modifies tubulin, adding a single glutamate on the gamma-carboxyl group of specific glutamate residues of target proteins. Involved in the side-chain initiation step of the polyglutamylation reaction but not in the elongation step. Preferentially modifies beta-tail tubulin over the alpha-tubulin. Involved in side-chain glutamylation of tubulin in sensory cilia. Together with ttll-5 and ttll-11, required for male mating. This is Tubulin polyglutamylase ttll-4 (ttll-4) from Caenorhabditis briggsae.